An 891-amino-acid polypeptide reads, in one-letter code: DNA polymerase I (891 aa).

The region spanning 1–313 is the 5'-3' exonuclease domain; it reads MEQPVIKEGT…LLDNTPALDN (313 aa). Residues 314-488 enclose the 3'-5' exonuclease domain; the sequence is TPKKSCMIVL…RLCEYFEKGG (175 aa). The polymerase stretch occupies residues 492–890; the sequence is NLLSLAREIE…FIAKRWNELK (399 aa).

This sequence belongs to the DNA polymerase type-A family. As to quaternary structure, single-chain monomer with multiple functions.

It carries out the reaction DNA(n) + a 2'-deoxyribonucleoside 5'-triphosphate = DNA(n+1) + diphosphate. In terms of biological role, in addition to polymerase activity, this DNA polymerase exhibits 3'-5' and 5'-3' exonuclease activity. This is DNA polymerase I (polA) from Helicobacter pylori (strain ATCC 700392 / 26695) (Campylobacter pylori).